We begin with the raw amino-acid sequence, 344 residues long: SUMO-activating enzyme subunit 1 (344 aa).

It belongs to the ubiquitin-activating E1 family. In terms of assembly, heterodimer of sae1 and uba2/sae2. The heterodimer corresponds to the two domains that are encoded on a single polypeptide chain in ubiquitin-activating enzyme E1. Interacts with ube2i.

The protein resides in the nucleus. It participates in protein modification; protein sumoylation. Functionally, the heterodimer acts as an E1 ligase for sumo1, sumo2, and sumo3. It mediates ATP-dependent activation of sumo proteins followed by formation of a thioester bond between a sumo protein and a conserved active site cysteine residue on uba2/sae2. The polypeptide is SUMO-activating enzyme subunit 1 (sae1) (Xenopus laevis (African clawed frog)).